Reading from the N-terminus, the 2028-residue chain is Phosphatidylinositol 4-kinase alpha 1 (2028 aa).

The interval Pro184–Ser241 is disordered. Residues Gln192–Tyr215 show a composition bias toward polar residues. Low complexity predominate over residues Ser231–Ser241. Positions Thr1483–Gln1659 constitute a PIK helical domain. The interval Val1660–Val1773 is pleckstrin homology (PH) domain conferring phosphoinositide binding specificity. One can recognise a PI3K/PI4K catalytic domain in the interval Val1734–Thr2012. A G-loop region spans residues Leu1740 to Val1746. Residues Gln1876–Asn1884 form a catalytic loop region. The interval His1895 to Ser1920 is activation loop.

It belongs to the PI3/PI4-kinase family. Type III PI4K subfamily. In terms of assembly, interacts in vitro with actin filaments via its PH domain. In terms of tissue distribution, present in leaves and inflorescences.

The protein resides in the membrane. It localises to the cytoplasm. Its subcellular location is the perinuclear region. It catalyses the reaction a 1,2-diacyl-sn-glycero-3-phospho-(1D-myo-inositol) + ATP = a 1,2-diacyl-sn-glycero-3-phospho-(1D-myo-inositol 4-phosphate) + ADP + H(+). Its activity is regulated as follows. Repressed by PtdIns4P, adenosine and wortmannin, but stimulated by other negatively charged lipids such as PtdIns3P, PtdOH, and phosphatidyl-serine (PtdSer). Functionally, acts on phosphatidylinositol (PtdIns) in the first committed step in the production of the second messenger inositol-1,4,5,-trisphosphate. Can bind to phosphatidylinositol 4-monophosphate (PI-4-P or PtdIns4P), phosphatidylinositol 4,5-bisphosphate (PI-4,5-P2 or PtdIns4,5P2), and phosphatidic acid (PtdOH), but not to 3-phosphoinositides. May function upstream of the cold response phosphoinositide-dependent phospholipase C (PI-PLC) pathway. This is Phosphatidylinositol 4-kinase alpha 1 from Arabidopsis thaliana (Mouse-ear cress).